A 300-amino-acid chain; its full sequence is tRNA pseudouridine synthase B (300 aa).

Asp-47 serves as the catalytic Nucleophile.

The protein belongs to the pseudouridine synthase TruB family. Type 1 subfamily.

It catalyses the reaction uridine(55) in tRNA = pseudouridine(55) in tRNA. Its function is as follows. Responsible for synthesis of pseudouridine from uracil-55 in the psi GC loop of transfer RNAs. In Azoarcus sp. (strain BH72), this protein is tRNA pseudouridine synthase B.